A 207-amino-acid polypeptide reads, in one-letter code: Vexin (207 aa).

The interval glutamate 56–lysine 100 is disordered. The span at leucine 58–arginine 71 shows a compositional bias: basic and acidic residues.

The protein belongs to the vexin family.

Its subcellular location is the cell membrane. The protein localises to the nucleus. In terms of biological role, required for neurogenesis in the neural plate and retina. Strongly cooperates with neural bHLH factors to promote neurogenesis. In Homo sapiens (Human), this protein is Vexin.